Here is a 407-residue protein sequence, read N- to C-terminus: Tyrosine--tRNA ligase (407 aa).

The 'HIGH' region motif lies at 47 to 56 (PTAPDLHLGA). The 'KMSKS' region signature appears at 231–235 (KMSKS). Lysine 234 contributes to the ATP binding site. The region spanning 342-403 (PRLSQLLVQV…GKRHFARVAL (62 aa)) is the S4 RNA-binding domain.

Belongs to the class-I aminoacyl-tRNA synthetase family. TyrS type 2 subfamily. Homodimer.

Its subcellular location is the cytoplasm. It catalyses the reaction tRNA(Tyr) + L-tyrosine + ATP = L-tyrosyl-tRNA(Tyr) + AMP + diphosphate + H(+). Functionally, catalyzes the attachment of tyrosine to tRNA(Tyr) in a two-step reaction: tyrosine is first activated by ATP to form Tyr-AMP and then transferred to the acceptor end of tRNA(Tyr). The polypeptide is Tyrosine--tRNA ligase (Acidithiobacillus ferrooxidans (Thiobacillus ferrooxidans)).